Here is a 446-residue protein sequence, read N- to C-terminus: N-succinylarginine dihydrolase 2 (446 aa).

Substrate-binding positions include 20 to 29 (VGLSPGNLAS), Asn111, and 138 to 139 (HR). Glu175 is an active-site residue. Position 212 (Arg212) interacts with substrate. The active site involves His246. Substrate contacts are provided by Asp248 and Asn361. Residue Cys367 is the Nucleophile of the active site.

This sequence belongs to the succinylarginine dihydrolase family. Homodimer.

The catalysed reaction is N(2)-succinyl-L-arginine + 2 H2O + 2 H(+) = N(2)-succinyl-L-ornithine + 2 NH4(+) + CO2. It participates in amino-acid degradation; L-arginine degradation via AST pathway; L-glutamate and succinate from L-arginine: step 2/5. Functionally, catalyzes the hydrolysis of N(2)-succinylarginine into N(2)-succinylornithine, ammonia and CO(2). The polypeptide is N-succinylarginine dihydrolase 2 (Caulobacter vibrioides (strain ATCC 19089 / CIP 103742 / CB 15) (Caulobacter crescentus)).